A 333-amino-acid chain; its full sequence is Large ribosomal subunit protein uL3 (333 aa).

2 stretches are compositionally biased toward basic residues: residues 1–10 (MGMKRNRPRR) and 17–26 (PRKRAKRPVP). Residues 1-29 (MGMKRNRPRRGSLAFSPRKRAKRPVPKIR) are disordered.

The protein belongs to the universal ribosomal protein uL3 family. As to quaternary structure, part of the 50S ribosomal subunit. Forms a cluster with proteins L14 and L24e.

Its function is as follows. One of the primary rRNA binding proteins, it binds directly near the 3'-end of the 23S rRNA, where it nucleates assembly of the 50S subunit. In Methanococcus aeolicus (strain ATCC BAA-1280 / DSM 17508 / OCM 812 / Nankai-3), this protein is Large ribosomal subunit protein uL3.